Reading from the N-terminus, the 230-residue chain is Probable septum site-determining protein MinC (230 aa).

This sequence belongs to the MinC family. As to quaternary structure, interacts with MinD and FtsZ.

Cell division inhibitor that blocks the formation of polar Z ring septums. Rapidly oscillates between the poles of the cell to destabilize FtsZ filaments that have formed before they mature into polar Z rings. Prevents FtsZ polymerization. This is Probable septum site-determining protein MinC from Erwinia tasmaniensis (strain DSM 17950 / CFBP 7177 / CIP 109463 / NCPPB 4357 / Et1/99).